Consider the following 209-residue polypeptide: SelT-like protein (209 aa).

The N-terminal stretch at 1 to 22 (MDKTQLILLGLPIFLLCSDLFN) is a signal peptide. A disulfide bridge links cysteine 64 with cysteine 67.

This sequence belongs to the SelWTH family. SELT subfamily.

The chain is SelT-like protein from Arabidopsis thaliana (Mouse-ear cress).